The sequence spans 65 residues: Kappa-scoloptoxin(04)-Ssd1a (65 aa).

Positions 1 to 24 are cleaved as a signal peptide; that stretch reads MKKTCVVSVFLVLLLLKFHDLSMG. Residues 25 to 36 constitute a propeptide that is removed on maturation; that stretch reads EEISPLKKVAPR. Cystine bridges form between cysteine 42/cysteine 53 and cysteine 47/cysteine 60.

Expressed by the venom gland.

It localises to the secreted. Functionally, voltage-gated potassium channel inhibitor. In Scolopendra dehaani (Thai centipede), this protein is Kappa-scoloptoxin(04)-Ssd1a.